The primary structure comprises 236 residues: 2,3,4,5-tetrahydropyridine-2,6-dicarboxylate N-acetyltransferase (236 aa).

It belongs to the transferase hexapeptide repeat family. DapH subfamily.

The catalysed reaction is (S)-2,3,4,5-tetrahydrodipicolinate + acetyl-CoA + H2O = L-2-acetamido-6-oxoheptanedioate + CoA. It participates in amino-acid biosynthesis; L-lysine biosynthesis via DAP pathway; LL-2,6-diaminopimelate from (S)-tetrahydrodipicolinate (acetylase route): step 1/3. Functionally, catalyzes the transfer of an acetyl group from acetyl-CoA to tetrahydrodipicolinate. The sequence is that of 2,3,4,5-tetrahydropyridine-2,6-dicarboxylate N-acetyltransferase from Bacillus pumilus (strain SAFR-032).